A 371-amino-acid chain; its full sequence is Chaperone protein DnaJ (371 aa).

A J domain is found at Ser5 to Gly70. The CR-type zinc finger occupies Gly139–Arg217. 8 residues coordinate Zn(2+): Cys152, Cys155, Cys169, Cys172, Cys191, Cys194, Cys205, and Cys208. CXXCXGXG motif repeat units lie at residues Cys152–Gly159, Cys169–Gly176, Cys191–Gly198, and Cys205–Gly212.

Belongs to the DnaJ family. Homodimer. Requires Zn(2+) as cofactor.

Its subcellular location is the cytoplasm. Functionally, participates actively in the response to hyperosmotic and heat shock by preventing the aggregation of stress-denatured proteins and by disaggregating proteins, also in an autonomous, DnaK-independent fashion. Unfolded proteins bind initially to DnaJ; upon interaction with the DnaJ-bound protein, DnaK hydrolyzes its bound ATP, resulting in the formation of a stable complex. GrpE releases ADP from DnaK; ATP binding to DnaK triggers the release of the substrate protein, thus completing the reaction cycle. Several rounds of ATP-dependent interactions between DnaJ, DnaK and GrpE are required for fully efficient folding. Also involved, together with DnaK and GrpE, in the DNA replication of plasmids through activation of initiation proteins. The protein is Chaperone protein DnaJ of Leptospira borgpetersenii serovar Hardjo-bovis (strain JB197).